Here is a 224-residue protein sequence, read N- to C-terminus: UPF0173 metal-dependent hydrolase TTHA1283 (224 aa).

It belongs to the UPF0173 family.

The sequence is that of UPF0173 metal-dependent hydrolase TTHA1283 from Thermus thermophilus (strain ATCC 27634 / DSM 579 / HB8).